The chain runs to 149 residues: SsrA-binding protein (149 aa).

Residues 121-149 form a disordered region; it reads GKKQHDKRAAEKDREWQREKQRLVRSAQH. A compositionally biased stretch (basic and acidic residues) spans 127 to 142; that stretch reads KRAAEKDREWQREKQR.

It belongs to the SmpB family.

The protein resides in the cytoplasm. Functionally, required for rescue of stalled ribosomes mediated by trans-translation. Binds to transfer-messenger RNA (tmRNA), required for stable association of tmRNA with ribosomes. tmRNA and SmpB together mimic tRNA shape, replacing the anticodon stem-loop with SmpB. tmRNA is encoded by the ssrA gene; the 2 termini fold to resemble tRNA(Ala) and it encodes a 'tag peptide', a short internal open reading frame. During trans-translation Ala-aminoacylated tmRNA acts like a tRNA, entering the A-site of stalled ribosomes, displacing the stalled mRNA. The ribosome then switches to translate the ORF on the tmRNA; the nascent peptide is terminated with the 'tag peptide' encoded by the tmRNA and targeted for degradation. The ribosome is freed to recommence translation, which seems to be the essential function of trans-translation. The chain is SsrA-binding protein from Thiobacillus denitrificans (strain ATCC 25259 / T1).